The sequence spans 488 residues: Rhamnulokinase (488 aa).

A11 to R15 is an ATP binding site. Residues A79 and H234–T236 each bind substrate. D235 acts as the Proton acceptor in catalysis. T257 contacts ATP. Position 294 (N294) interacts with substrate. The ATP site is built by Q302 and G401.

This sequence belongs to the rhamnulokinase family. Mg(2+) is required as a cofactor.

The catalysed reaction is L-rhamnulose + ATP = L-rhamnulose 1-phosphate + ADP + H(+). It functions in the pathway carbohydrate degradation; L-rhamnose degradation; glycerone phosphate from L-rhamnose: step 2/3. Involved in the catabolism of L-rhamnose (6-deoxy-L-mannose). Catalyzes the transfer of the gamma-phosphate group from ATP to the 1-hydroxyl group of L-rhamnulose to yield L-rhamnulose 1-phosphate. This Lactiplantibacillus plantarum (strain ATCC BAA-793 / NCIMB 8826 / WCFS1) (Lactobacillus plantarum) protein is Rhamnulokinase.